An 827-amino-acid chain; its full sequence is Stage II sporulation protein E (827 aa).

10 helical membrane passes run Ile-49–Phe-69, Gly-71–Gly-91, Val-116–Met-136, Gly-142–Glu-162, Gln-175–Ile-195, Thr-206–Val-226, Gly-247–Ser-267, Leu-269–Gly-289, Gly-299–Leu-319, and Thr-320–Gln-340. The Cytoplasmic segment spans residues Glu-341 to Ser-827. The PPM-type phosphatase domain occupies Ser-594–Ile-804.

The cofactor is Mn(2+).

It is found in the cell membrane. It catalyses the reaction O-phospho-L-seryl-[protein] + H2O = L-seryl-[protein] + phosphate. The catalysed reaction is O-phospho-L-threonyl-[protein] + H2O = L-threonyl-[protein] + phosphate. Normally needed for pro-sigma E processing during sporulation but can be bypassed in vegetative cells. Activates SpoIIAA by dephosphorylation. The chain is Stage II sporulation protein E (spoIIE) from Bacillus subtilis (strain 168).